The sequence spans 194 residues: MNDEEQDDKTKELPLGKETEANLFKSRSIFIYGPINQELAQKVCSQLVALAAASDEDIRIYVNSPGGHVESGDSIHDMVKFIKPKVWMIGTGWVASAGALIYVAAPRERRLCLPNTRFLLHQPSGGTRGMASDIEIQAREIIKMNERLNKIMAEATGQPLEKIAKDTDRDYWLSAEEAKDYGLVSRIVTSQADI.

Ser-96 acts as the Nucleophile in catalysis. His-121 is a catalytic residue.

Belongs to the peptidase S14 family. Fourteen ClpP subunits assemble into 2 heptameric rings which stack back to back to give a disk-like structure with a central cavity, resembling the structure of eukaryotic proteasomes.

The protein resides in the cytoplasm. The catalysed reaction is Hydrolysis of proteins to small peptides in the presence of ATP and magnesium. alpha-casein is the usual test substrate. In the absence of ATP, only oligopeptides shorter than five residues are hydrolyzed (such as succinyl-Leu-Tyr-|-NHMec, and Leu-Tyr-Leu-|-Tyr-Trp, in which cleavage of the -Tyr-|-Leu- and -Tyr-|-Trp bonds also occurs).. Cleaves peptides in various proteins in a process that requires ATP hydrolysis. Has a chymotrypsin-like activity. Plays a major role in the degradation of misfolded proteins. This Rhizobium etli (strain ATCC 51251 / DSM 11541 / JCM 21823 / NBRC 15573 / CFN 42) protein is ATP-dependent Clp protease proteolytic subunit 3.